A 401-amino-acid polypeptide reads, in one-letter code: Argininosuccinate synthase (401 aa).

An ATP-binding site is contributed by 8–16; sequence AYSGGLDTS. Y85 lines the L-citrulline pocket. An ATP-binding site is contributed by G115. L-aspartate contacts are provided by T117, N121, and D122. N121 contacts L-citrulline. R125, S173, E258, and Y270 together coordinate L-citrulline.

The protein belongs to the argininosuccinate synthase family. Type 1 subfamily. Homotetramer.

It localises to the cytoplasm. The enzyme catalyses L-citrulline + L-aspartate + ATP = 2-(N(omega)-L-arginino)succinate + AMP + diphosphate + H(+). Its pathway is amino-acid biosynthesis; L-arginine biosynthesis; L-arginine from L-ornithine and carbamoyl phosphate: step 2/3. This Staphylococcus aureus (strain bovine RF122 / ET3-1) protein is Argininosuccinate synthase.